Consider the following 387-residue polypeptide: Phosphoglycerate kinase (387 aa).

Substrate is bound by residues 21 to 23, Arg-36, 59 to 62, Arg-113, and Arg-146; these read DLN and HLGR. Residues Lys-197, Glu-314, and 340–343 contribute to the ATP site; that span reads GGDT.

The protein belongs to the phosphoglycerate kinase family. As to quaternary structure, monomer.

It localises to the cytoplasm. It catalyses the reaction (2R)-3-phosphoglycerate + ATP = (2R)-3-phospho-glyceroyl phosphate + ADP. It functions in the pathway carbohydrate degradation; glycolysis; pyruvate from D-glyceraldehyde 3-phosphate: step 2/5. In Pseudomonas savastanoi pv. phaseolicola (strain 1448A / Race 6) (Pseudomonas syringae pv. phaseolicola (strain 1448A / Race 6)), this protein is Phosphoglycerate kinase.